The primary structure comprises 342 residues: Anthranilate phosphoribosyltransferase (342 aa).

5-phospho-alpha-D-ribose 1-diphosphate contacts are provided by residues G79, 82 to 83 (GD), T87, 89 to 92 (NVST), 107 to 115 (KHGNRSVSS), and S119. G79 is a binding site for anthranilate. S91 contacts Mg(2+). Residue N110 participates in anthranilate binding. R165 is an anthranilate binding site. Mg(2+) contacts are provided by D223 and E224.

Belongs to the anthranilate phosphoribosyltransferase family. As to quaternary structure, homodimer. Mg(2+) is required as a cofactor.

It carries out the reaction N-(5-phospho-beta-D-ribosyl)anthranilate + diphosphate = 5-phospho-alpha-D-ribose 1-diphosphate + anthranilate. It participates in amino-acid biosynthesis; L-tryptophan biosynthesis; L-tryptophan from chorismate: step 2/5. In terms of biological role, catalyzes the transfer of the phosphoribosyl group of 5-phosphorylribose-1-pyrophosphate (PRPP) to anthranilate to yield N-(5'-phosphoribosyl)-anthranilate (PRA). This Aeromonas hydrophila subsp. hydrophila (strain ATCC 7966 / DSM 30187 / BCRC 13018 / CCUG 14551 / JCM 1027 / KCTC 2358 / NCIMB 9240 / NCTC 8049) protein is Anthranilate phosphoribosyltransferase.